We begin with the raw amino-acid sequence, 81 residues long: Small ribosomal subunit protein uS15 (81 aa).

The protein belongs to the universal ribosomal protein uS15 family. Part of the 30S ribosomal subunit. Forms a bridge to the 50S subunit in the 70S ribosome, contacting the 23S rRNA.

Its function is as follows. One of the primary rRNA binding proteins, it binds directly to 16S rRNA where it helps nucleate assembly of the platform of the 30S subunit by binding and bridging several RNA helices of the 16S rRNA. In terms of biological role, forms an intersubunit bridge (bridge B4) with the 23S rRNA of the 50S subunit in the ribosome. The sequence is that of Small ribosomal subunit protein uS15 from Mesomycoplasma hyorhinis (Mycoplasma hyorhinis).